Reading from the N-terminus, the 138-residue chain is Thyrotropin subunit beta (138 aa).

Residues 1–20 (MTATFLMSMIFGLACGQAMS) form the signal peptide. 6 disulfides stabilise this stretch: Cys-22-Cys-72, Cys-36-Cys-87, Cys-39-Cys-125, Cys-47-Cys-103, Cys-51-Cys-105, and Cys-108-Cys-115. Residue Asn-43 is glycosylated (N-linked (GlcNAc...) asparagine). Positions 133–138 (MVGFSI) are excised as a propeptide.

It belongs to the glycoprotein hormones subunit beta family. As to quaternary structure, heterodimer of a common alpha chain and a unique beta chain which confers biological specificity to thyrotropin, lutropin, follitropin and gonadotropin.

The protein localises to the secreted. Functionally, indispensable for the control of thyroid structure and metabolism. The protein is Thyrotropin subunit beta (TSHB) of Bos taurus (Bovine).